We begin with the raw amino-acid sequence, 228 residues long: Phosphatidylserine decarboxylase proenzyme (228 aa).

The Schiff-base intermediate with substrate; via pyruvic acid role is filled by S197. Position 197 is a pyruvic acid (Ser); by autocatalysis (S197).

This sequence belongs to the phosphatidylserine decarboxylase family. PSD-A subfamily. Heterodimer of a large membrane-associated beta subunit and a small pyruvoyl-containing alpha subunit. Requires pyruvate as cofactor. Is synthesized initially as an inactive proenzyme. Formation of the active enzyme involves a self-maturation process in which the active site pyruvoyl group is generated from an internal serine residue via an autocatalytic post-translational modification. Two non-identical subunits are generated from the proenzyme in this reaction, and the pyruvate is formed at the N-terminus of the alpha chain, which is derived from the carboxyl end of the proenzyme. The post-translation cleavage follows an unusual pathway, termed non-hydrolytic serinolysis, in which the side chain hydroxyl group of the serine supplies its oxygen atom to form the C-terminus of the beta chain, while the remainder of the serine residue undergoes an oxidative deamination to produce ammonia and the pyruvoyl prosthetic group on the alpha chain.

The protein localises to the cell membrane. It carries out the reaction a 1,2-diacyl-sn-glycero-3-phospho-L-serine + H(+) = a 1,2-diacyl-sn-glycero-3-phosphoethanolamine + CO2. The protein operates within phospholipid metabolism; phosphatidylethanolamine biosynthesis; phosphatidylethanolamine from CDP-diacylglycerol: step 2/2. Catalyzes the formation of phosphatidylethanolamine (PtdEtn) from phosphatidylserine (PtdSer). The protein is Phosphatidylserine decarboxylase proenzyme of Bacteroides fragilis (strain ATCC 25285 / DSM 2151 / CCUG 4856 / JCM 11019 / LMG 10263 / NCTC 9343 / Onslow / VPI 2553 / EN-2).